Reading from the N-terminus, the 237-residue chain is tRNA (guanine-N(7)-)-methyltransferase (237 aa).

Residues aspartate 35, glutamate 60, asparagine 87, and aspartate 113 each contribute to the S-adenosyl-L-methionine site. Residue aspartate 113 is part of the active site. Lysine 117 and aspartate 149 together coordinate substrate.

This sequence belongs to the class I-like SAM-binding methyltransferase superfamily. TrmB family.

It carries out the reaction guanosine(46) in tRNA + S-adenosyl-L-methionine = N(7)-methylguanosine(46) in tRNA + S-adenosyl-L-homocysteine. It participates in tRNA modification; N(7)-methylguanine-tRNA biosynthesis. Functionally, catalyzes the formation of N(7)-methylguanine at position 46 (m7G46) in tRNA. This chain is tRNA (guanine-N(7)-)-methyltransferase, found in Synechococcus sp. (strain WH7803).